Reading from the N-terminus, the 427-residue chain is MRELYLKTLKKEVVPSEGCTEPIAIAYAASIAAEHLKGEIKEVNIYLSKNVIKNALGVGIPGTGGVGIEIAAALGISIQKSYKKLTILSNFTEDELKKAKEIVDKNIINIKQKNTNKALYIEVELLSETSKAKVIIEDTHTNVTLIECDDEIIMDNNSEVSEDLEEDYKLFKIADIYNFAKEVDFDHIKFILESAKMNEKVSEEGLKGDYGLQVGSKIIQKGNFNLFSNDASNKIIAASAAASDARMDGCAMPIMTTAGSGNQGIACSIPVAQTARLLDKSEEELARALVLSNLVTIRIKKHMGRLSPLCGAGIAGATGASCGITYLLGGDLENINYCINNMISDLSGMICDGAKETCALKIATGTNAAIQCANLAINGISATANDGIVAKDVEETIESIETLIQNGFKNVDDTILNIMLEKKKNNK.

Belongs to the UPF0597 family.

The chain is UPF0597 protein CPF_0803 from Clostridium perfringens (strain ATCC 13124 / DSM 756 / JCM 1290 / NCIMB 6125 / NCTC 8237 / Type A).